Here is a 307-residue protein sequence, read N- to C-terminus: Cuticle collagen 36 (307 aa).

Disordered regions lie at residues 76-102 and 116-307; these read TRSRRDAGYKEGSGSGGSGSGGYGGPT and QQGP…PPGY. Residues 86–102 show a composition bias toward gly residues; the sequence is EGSGSGGSGSGGYGGPT. Triple-helical region stretches follow at residues 89–105, 118–150, 167–187, 194–226, 231–257, and 260–295; these read GSGGSGSGGYGGPTGAG, GPAGPPGPAGDTGPNGNDGHHGAPGVPGKEGSI, GPQGAVGQQGPKGPPGPKGKS, GKNGEPGMIGPPGPPGGVGEPGPPGPAGQPGRV, GAAGPAGPRGVKGPPGPKGLPGIAGLT, and GGQGPPGDAGGPGPVGGQGPPGPQGPQGPPGDEGSC. Over residues 157-168 the composition is skewed to pro residues; it reads PSEPCIICPPGP. The segment covering 186 to 196 has biased composition (basic and acidic residues); sequence KSQERAADGKN. The span at 202–220 shows a compositional bias: pro residues; that stretch reads IGPPGPPGGVGEPGPPGPA. Positions 231 to 242 are enriched in low complexity; that stretch reads GAAGPAGPRGVK. Positions 258-278 are enriched in gly residues; that stretch reads EIGGQGPPGDAGGPGPVGGQG. Pro residues predominate over residues 279-288; sequence PPGPQGPQGP.

The protein belongs to the cuticular collagen family. Collagen polypeptide chains are complexed within the cuticle by disulfide bonds and other types of covalent cross-links.

Functionally, nematode cuticles are composed largely of collagen-like proteins. The cuticle functions both as an exoskeleton and as a barrier to protect the worm from its environment. This Caenorhabditis elegans protein is Cuticle collagen 36 (col-36).